A 999-amino-acid polypeptide reads, in one-letter code: Sarcoplasmic/endoplasmic reticulum calcium ATPase 3 (999 aa).

M1 bears the N-acetylmethionine mark. Topologically, residues 1–48 (MEAAHLLPAADVLRHFSVTAEGGLSPAQVTGARERYGPNELPSEEGKS) are cytoplasmic. At S17 the chain carries Phosphoserine. T19 is subject to Phosphothreonine. The residue at position 25 (S25) is a Phosphoserine. A helical transmembrane segment spans residues 49–69 (LWELVLEQFEDLLVRILLLAA). The Lumenal portion of the chain corresponds to 70–89 (LVSFVLAWFEEGEETTTAFV). The chain crosses the membrane as a helical span at residues 90 to 110 (EPLVIMLILVANAIVGVWQER). Residues 111–253 (NAESAIEALK…PERTPLQRKL (143 aa)) lie on the Cytoplasmic side of the membrane. The helical transmembrane segment at 254-273 (DEFGRQLSHAISVICVAVWV) threads the bilayer. Residues 274–295 (INIGHFADPAHGGSWLRGAVYY) lie on the Lumenal side of the membrane. A helical membrane pass occupies residues 296–313 (FKIAVALAVAAIPEGLPA). 4 residues coordinate Ca(2+): V304, A305, I307, and E309. Topologically, residues 314–757 (VITTCLALGT…EEGRAIYSNM (444 aa)) are cytoplasmic. The active-site 4-aspartylphosphate intermediate is the D351. The Mg(2+) site is built by D351 and T353. T353 serves as a coordination point for ATP. The interval 370–400 (AEADAGSCLLHEFTISGTTYTPEGEVRQGDQ) is interaction with phospholamban 1. At T415 the chain carries Phosphothreonine. Positions 442, 489, 515, 560, 625, 626, and 627 each coordinate ATP. S662 carries the phosphoserine modification. ATP contacts are provided by R678 and K684. D703 is a Mg(2+) binding site. N706 contributes to the ATP binding site. A helical transmembrane segment spans residues 758 to 777 (KQFIRYLISSNVGEVVCIFL). Positions 768 and 771 each coordinate Ca(2+). The Lumenal portion of the chain corresponds to 778 to 787 (TAILGLPEAL). A helical transmembrane segment spans residues 788–808 (IPVQLLWVNLVTDGLPATALG). The interaction with phospholamban 2 stretch occupies residues 788–808 (IPVQLLWVNLVTDGLPATALG). Ca(2+) is bound by residues N796, T799, and D800. Over 809–828 (FNPPDLDIMEKLPRSPREAL) the chain is Cytoplasmic. Residues 829–851 (ISGWLFFRYLAIGVYVGLATVAA) form a helical membrane-spanning segment. At 852-897 (ATWWFVYDAEGPHINFYQLRNFLKCSEDNPLFAGIDCEVFESRFPT) the chain is on the lumenal side. Residues 898-917 (TMALSVLVTIEMCNALNSVS) form a helical membrane-spanning segment. E908 is a binding site for Ca(2+). The Cytoplasmic portion of the chain corresponds to 918–930 (ENQSLLRMPPWMN). A helical membrane pass occupies residues 931 to 949 (PWLLVAVAMSMALHFLILL). The Lumenal segment spans residues 950–964 (VPPLPLIFQVTPLSG). The helical transmembrane segment at 965 to 985 (RQWVVVLQISLPVILLDEALK) threads the bilayer. Residues 986–999 (YLSRNHMHEEMSQK) are Cytoplasmic-facing.

It belongs to the cation transport ATPase (P-type) (TC 3.A.3) family. Type IIA subfamily. As to quaternary structure, interacts with sarcolipin (SLN). Interacts with phospholamban (PLN). Interacts with myoregulin (MRLN). Interacts with DWORF. Interacts with VMP1. Interacts with TUNAR; the interaction occurs at low levels in low glucose conditions and is increased by high glucose levels. Mg(2+) serves as cofactor. Found in most tissues. Most abundant in thymus, trachea, salivary gland, spleen, bone marrow, lymph node, peripheral leukocytes, pancreas and colon. Also detected in fetal tissues. Expressed in cell lineages of hematopoietic, epithelial, or embryonic origin and also expressed in several cancer cell lines.

It localises to the nucleus membrane. The protein localises to the endoplasmic reticulum membrane. The protein resides in the sarcoplasmic reticulum membrane. The enzyme catalyses Ca(2+)(in) + ATP + H2O = Ca(2+)(out) + ADP + phosphate + H(+). Its activity is regulated as follows. Inhibited by sarcolipin (SLN), phospholamban (PLN) and myoregulin (MRLN). Enhanced by DWORF; DWORF increases activity by displacing sarcolipin (SLN), phospholamban (PLN) and myoregulin (MRLN). Its function is as follows. This magnesium-dependent enzyme catalyzes the hydrolysis of ATP coupled with the transport of calcium. Transports calcium ions from the cytosol into the sarcoplasmic/endoplasmic reticulum lumen. Contributes to calcium sequestration involved in muscular excitation/contraction. The chain is Sarcoplasmic/endoplasmic reticulum calcium ATPase 3 from Homo sapiens (Human).